The sequence spans 347 residues: Coproporphyrinogen-III oxidase, aerobic 2 (347 aa).

The segment at 1–31 is disordered; the sequence is MGRHSDNSLQESANHTVLLTSPTNTIPKDSR. Positions 7–31 are enriched in polar residues; the sequence is NSLQESANHTVLLTSPTNTIPKDSR. An important for dimerization region spans residues 75–84; it reads VIREGRVFEQ. Substrate is bound at residue serine 119. The active-site Proton donor is histidine 133. Substrate is bound by residues 135–137 and 305–310; these read NYR and KGRTES. The tract at residues 287–322 is important for dimerization; the sequence is YVEFNLVYDRGTVFGLQTKGRTESILMSLPPLARWE.

Belongs to the aerobic coproporphyrinogen-III oxidase family. Homodimer.

The protein localises to the cytoplasm. The enzyme catalyses coproporphyrinogen III + O2 + 2 H(+) = protoporphyrinogen IX + 2 CO2 + 2 H2O. It functions in the pathway porphyrin-containing compound metabolism; protoporphyrin-IX biosynthesis; protoporphyrinogen-IX from coproporphyrinogen-III (O2 route): step 1/1. Key enzyme in heme biosynthesis. Catalyzes the oxidative decarboxylation of propionic acid side chains of rings A and B of coproporphyrinogen III. The protein is Coproporphyrinogen-III oxidase, aerobic 2 of Nostoc sp. (strain PCC 7120 / SAG 25.82 / UTEX 2576).